The sequence spans 75 residues: Small ribosomal subunit protein bS18c (75 aa).

It belongs to the bacterial ribosomal protein bS18 family. As to quaternary structure, part of the 30S ribosomal subunit.

The protein resides in the plastid. Its subcellular location is the chloroplast. The chain is Small ribosomal subunit protein bS18c from Angiopteris evecta (Mule's foot fern).